We begin with the raw amino-acid sequence, 530 residues long: MGSTATETEELENTTFKYLIGEQTEKMWQRLKGILRCLVKQLEKGDVNVIDLKKNIEYAASVLEAVYIDETRRLLDTDDELSDIQSDSVPSEVRDWLASTFTRKMGMMKKKSEEKPRFRSIVHVVQAGIFVERMYRKSYHMVGLAYPEAVIVTLKDVDKWSFDVFALNEASGEHSLKFMIYELFTRYDLINRFKIPVSCLIAFAEALEVGYSKYKNPYHNLIHAADVTQTVHYIMLHTGIMHWLTELEILAMVFAAAIHDYEHTGTTNNFHIQTRSDVAILYNDRSVLENHHVSAAYRLMQEEEMNVLINLSKDDWRDLRNLVIEMVLSTDMSGHFQQIKNIRNSLQQPEGLDKAKTMSLILHAADISHPAKSWKLHHRWTMALMEEFFLQGDKEAELGLPFSPLCDRKSTMVAQSQIGFIDFIVEPTFSLLTDSTEKIIIPLIEEDSKTKTPSYGASRRSNMKGTTNDGTYSPDYSLASVDLKSFKNSLVDIIQQNKERWKELAAQGEPDPHKNSDLVNAEEKHAETHS.

Calmodulin-binding stretches follow at residues 24–44 (TEKM…QLEK) and 114–137 (EKPR…MYRK). A PDEase domain is found at 142–508 (VGLAYPEAVI…ERWKELAAQG (367 aa)). H219 acts as the Proton donor in catalysis. H223, H259, D260, and D366 together coordinate Zn(2+). A Mg(2+)-binding site is contributed by D260. Disordered stretches follow at residues 450 to 471 (TKTP…NDGT) and 502 to 530 (KELA…ETHS). Residues 451–471 (KTPSYGASRRSNMKGTTNDGT) show a composition bias toward polar residues. The segment covering 510 to 530 (PDPHKNSDLVNAEEKHAETHS) has biased composition (basic and acidic residues).

This sequence belongs to the cyclic nucleotide phosphodiesterase family. PDE1 subfamily. In terms of assembly, homodimer. Interacts with YWHAZ. Requires Zn(2+) as cofactor. It depends on Mg(2+) as a cofactor.

The catalysed reaction is a nucleoside 3',5'-cyclic phosphate + H2O = a nucleoside 5'-phosphate + H(+). It catalyses the reaction 3',5'-cyclic GMP + H2O = GMP + H(+). It carries out the reaction 3',5'-cyclic AMP + H2O = AMP + H(+). Its activity is regulated as follows. Type I PDE are activated by the binding of calmodulin in the presence of Ca(2+). Its function is as follows. Calcium/calmodulin-dependent cyclic nucleotide phosphodiesterase with a dual specificity for the second messengers cGMP and cAMP, which are key regulators of many important physiological processes. Has a higher efficiency with cGMP compared to cAMP. The chain is Dual specificity calcium/calmodulin-dependent 3',5'-cyclic nucleotide phosphodiesterase 1A from Bos taurus (Bovine).